Reading from the N-terminus, the 381-residue chain is Homoserine O-succinyltransferase (381 aa).

The region spanning 45–360 (NAVLVCHALN…PHGHDAFLLD (316 aa)) is the AB hydrolase-1 domain. The active-site Nucleophile is the Ser-151. Substrate is bound at residue Arg-221. Active-site residues include Asp-321 and His-354. Asp-355 provides a ligand contact to substrate.

The protein belongs to the AB hydrolase superfamily. MetX family. Homodimer.

Its subcellular location is the cytoplasm. The enzyme catalyses L-homoserine + succinyl-CoA = O-succinyl-L-homoserine + CoA. It participates in amino-acid biosynthesis; L-methionine biosynthesis via de novo pathway; O-succinyl-L-homoserine from L-homoserine: step 1/1. Transfers a succinyl group from succinyl-CoA to L-homoserine, forming succinyl-L-homoserine. The chain is Homoserine O-succinyltransferase from Burkholderia ambifaria (strain MC40-6).